We begin with the raw amino-acid sequence, 302 residues long: HTH-type transcriptional regulator GbpR (302 aa).

One can recognise an HTH lysR-type domain in the interval 1 to 56; it reads MSHLRMLVMIEEHGQVSAAAAAMNMTQPAASRMLSEMEAIVKSPLCQRASRGVVLT. Residues 16–35 constitute a DNA-binding region (H-T-H motif); that stretch reads VSAAAAAMNMTQPAASRMLS.

This sequence belongs to the LysR transcriptional regulatory family.

Functionally, activator of the expression of chvE when bound to its inducer and represses its expression in the absence of inducer (L-arabinose, D-fucose or D-galactose). Negatively regulates its own expression. This Rhizobium radiobacter (Agrobacterium tumefaciens) protein is HTH-type transcriptional regulator GbpR (gbpR).